Reading from the N-terminus, the 518-residue chain is Glutamate--cysteine ligase (518 aa).

It belongs to the glutamate--cysteine ligase type 1 family. Type 1 subfamily.

The catalysed reaction is L-cysteine + L-glutamate + ATP = gamma-L-glutamyl-L-cysteine + ADP + phosphate + H(+). The protein operates within sulfur metabolism; glutathione biosynthesis; glutathione from L-cysteine and L-glutamate: step 1/2. This Escherichia coli O139:H28 (strain E24377A / ETEC) protein is Glutamate--cysteine ligase.